Reading from the N-terminus, the 245-residue chain is tRNA (guanine-N(1)-)-methyltransferase (245 aa).

S-adenosyl-L-methionine contacts are provided by residues G114 and 133–138 (IGDYVL).

This sequence belongs to the RNA methyltransferase TrmD family. Homodimer.

The protein resides in the cytoplasm. The enzyme catalyses guanosine(37) in tRNA + S-adenosyl-L-methionine = N(1)-methylguanosine(37) in tRNA + S-adenosyl-L-homocysteine + H(+). Its function is as follows. Specifically methylates guanosine-37 in various tRNAs. The polypeptide is tRNA (guanine-N(1)-)-methyltransferase (Prochlorococcus marinus (strain MIT 9312)).